The sequence spans 115 residues: Large ribosomal subunit protein P2x (115 aa).

Positions 78–115 (GGGGGAASAAEPVAESKKKVEEVKDESSDDAGMMGLFD) are disordered. Residues 91 to 103 (AESKKKVEEVKDE) are compositionally biased toward basic and acidic residues. Phosphoserine is present on residues Ser104 and Ser105.

The protein belongs to the eukaryotic ribosomal protein P1/P2 family. As to quaternary structure, P1 and P2 exist as dimers at the large ribosomal subunit.

In terms of biological role, plays an important role in the elongation step of protein synthesis. The protein is Large ribosomal subunit protein P2x (RPP2C) of Arabidopsis thaliana (Mouse-ear cress).